The primary structure comprises 316 residues: Probable cell division protein WhiA (316 aa).

A DNA-binding region (H-T-H motif) is located at residues 277 to 310 (SLEQLGRLADPPITKDAIAGRIRRLLQLAEKTEK).

It belongs to the WhiA family.

Involved in cell division and chromosome segregation. In Bifidobacterium adolescentis (strain ATCC 15703 / DSM 20083 / NCTC 11814 / E194a), this protein is Probable cell division protein WhiA.